The sequence spans 239 residues: UDP-2,3-diacylglucosamine hydrolase (239 aa).

5 residues coordinate Mn(2+): Asp-8, His-10, Asp-41, Asn-78, and His-113. 78-79 contributes to the substrate binding site; sequence NR. Residues Asp-121, Ser-159, Asn-163, Lys-166, and His-194 each contribute to the substrate site. 2 residues coordinate Mn(2+): His-194 and His-196.

The protein belongs to the LpxH family. Requires Mn(2+) as cofactor.

The protein localises to the cell inner membrane. It carries out the reaction UDP-2-N,3-O-bis[(3R)-3-hydroxytetradecanoyl]-alpha-D-glucosamine + H2O = 2-N,3-O-bis[(3R)-3-hydroxytetradecanoyl]-alpha-D-glucosaminyl 1-phosphate + UMP + 2 H(+). The protein operates within glycolipid biosynthesis; lipid IV(A) biosynthesis; lipid IV(A) from (3R)-3-hydroxytetradecanoyl-[acyl-carrier-protein] and UDP-N-acetyl-alpha-D-glucosamine: step 4/6. Functionally, hydrolyzes the pyrophosphate bond of UDP-2,3-diacylglucosamine to yield 2,3-diacylglucosamine 1-phosphate (lipid X) and UMP by catalyzing the attack of water at the alpha-P atom. Involved in the biosynthesis of lipid A, a phosphorylated glycolipid that anchors the lipopolysaccharide to the outer membrane of the cell. This is UDP-2,3-diacylglucosamine hydrolase from Shewanella oneidensis (strain ATCC 700550 / JCM 31522 / CIP 106686 / LMG 19005 / NCIMB 14063 / MR-1).